A 120-amino-acid polypeptide reads, in one-letter code: Large ribosomal subunit protein uL18 (120 aa).

Belongs to the universal ribosomal protein uL18 family. In terms of assembly, part of the 50S ribosomal subunit; part of the 5S rRNA/L5/L18/L25 subcomplex. Contacts the 5S and 23S rRNAs.

In terms of biological role, this is one of the proteins that bind and probably mediate the attachment of the 5S RNA into the large ribosomal subunit, where it forms part of the central protuberance. The protein is Large ribosomal subunit protein uL18 of Afipia carboxidovorans (strain ATCC 49405 / DSM 1227 / KCTC 32145 / OM5) (Oligotropha carboxidovorans).